A 243-amino-acid chain; its full sequence is Late expression factor 1 (243 aa).

This sequence belongs to the baculoviridae LEF-1 family.

Required for late and very late gene expression. This is Late expression factor 1 (LEF-1) from Orgyia pseudotsugata multicapsid polyhedrosis virus (OpMNPV).